The primary structure comprises 663 residues: Putative glucosamine-6-phosphate deaminase-like protein BT_0258 (663 aa).

The segment at 1–290 is glucosamine-6-phosphate deaminase-like; sequence MKTNLSSQIT…NLTRIQRPWL (290 aa). Residue glutamate 184 is part of the active site.

It in the N-terminal section; belongs to the glucosamine/galactosamine-6-phosphate isomerase family. NagB subfamily.

This is Putative glucosamine-6-phosphate deaminase-like protein BT_0258 from Bacteroides thetaiotaomicron (strain ATCC 29148 / DSM 2079 / JCM 5827 / CCUG 10774 / NCTC 10582 / VPI-5482 / E50).